Reading from the N-terminus, the 371-residue chain is Aminomethyltransferase (371 aa).

It belongs to the GcvT family. The glycine cleavage system is composed of four proteins: P, T, L and H.

It carries out the reaction N(6)-[(R)-S(8)-aminomethyldihydrolipoyl]-L-lysyl-[protein] + (6S)-5,6,7,8-tetrahydrofolate = N(6)-[(R)-dihydrolipoyl]-L-lysyl-[protein] + (6R)-5,10-methylene-5,6,7,8-tetrahydrofolate + NH4(+). Functionally, the glycine cleavage system catalyzes the degradation of glycine. The polypeptide is Aminomethyltransferase (Nitrosococcus oceani (strain ATCC 19707 / BCRC 17464 / JCM 30415 / NCIMB 11848 / C-107)).